A 95-amino-acid polypeptide reads, in one-letter code: Protein TusB (95 aa).

This sequence belongs to the DsrH/TusB family. As to quaternary structure, heterohexamer, formed by a dimer of trimers. The hexameric TusBCD complex contains 2 copies each of TusB, TusC and TusD. The TusBCD complex interacts with TusE.

The protein localises to the cytoplasm. In terms of biological role, part of a sulfur-relay system required for 2-thiolation of 5-methylaminomethyl-2-thiouridine (mnm(5)s(2)U) at tRNA wobble positions. The polypeptide is Protein TusB (Salmonella dublin (strain CT_02021853)).